Reading from the N-terminus, the 519-residue chain is Cytochrome P450 709B1 (519 aa).

Residues 1–21 (MGLVIFLALIVLILIIGLRIF) form a helical membrane-spanning segment. Residue cysteine 464 coordinates heme.

The protein belongs to the cytochrome P450 family. The cofactor is heme. Highly expressed in siliques.

It is found in the membrane. Involved in stress response. Does not function as cytokinin hydroxylase in yeast heterologous system. In Arabidopsis thaliana (Mouse-ear cress), this protein is Cytochrome P450 709B1.